The chain runs to 347 residues: Heat-inducible transcription repressor HrcA (347 aa).

The protein belongs to the HrcA family.

Its function is as follows. Negative regulator of class I heat shock genes (grpE-dnaK-dnaJ and groELS operons). Prevents heat-shock induction of these operons. The polypeptide is Heat-inducible transcription repressor HrcA (Sphingopyxis alaskensis (strain DSM 13593 / LMG 18877 / RB2256) (Sphingomonas alaskensis)).